The chain runs to 607 residues: MSSFRSHTSGELRKSHVGETVRLAGWVHRKRDHGGLLFIDLRDNYGLTQLVFDPDRAEAFALAEKLRAEYVVAIEGKVVARSAETINANLPTGDIEIAVSSMEVLSEAQDLPLPVFGEPDYPEDIRLTYRFLDLRRETLHRNILLRSKIIADIRRRMTEVGFNEFQTPILTASSPEGARDFLVPSRMHPGKFYALPQAPQQFKQLIMVAGFDRYFQIAPCFRDEDARADRSPGEFYQLDVEMSFVTQDDVFAAIEPVLHGLFEKFAEGKKVSSYPFTRIPYAEAIRKYGSDKPDLRNPIVMESVTDHFRGSGFKVFAGLIEKDSKVEVWAIPAPGGGNRAFCDRMNSWAQGEGQPGLGYIFFREEGGALEGAGPVAKNIGPERTEAIRTQLGLKAGDAVFFVAGVPAKTASFAGLARTRVGTELGLIEEDIFKFCWIVDFPMFEWNEDEKKIDFSHNPFSMPNYPLDKFLKLDKDNADEILGMTAFQYDIVCNGVELSSGAIRNHKPDVMYKAFEIAGYDKSVVETKFGGMLNAFKYGAPPHGGLAPGIDRMVMLLAGVENLREVTMFPMNQQAQDLLMQAPSEVEPKQLKELHIRVVPPLEKKKEG.

An L-aspartate-binding site is contributed by Glu176. The segment at 200 to 203 (QQFK) is aspartate. Arg222 and His456 together coordinate L-aspartate. 222–224 (RDE) is a binding site for ATP. ATP is bound at residue Glu496. Residue Arg503 coordinates L-aspartate. 548-551 (GIDR) contributes to the ATP binding site.

Belongs to the class-II aminoacyl-tRNA synthetase family. Type 1 subfamily. In terms of assembly, homodimer.

The protein resides in the cytoplasm. The enzyme catalyses tRNA(Asx) + L-aspartate + ATP = L-aspartyl-tRNA(Asx) + AMP + diphosphate. In terms of biological role, aspartyl-tRNA synthetase with relaxed tRNA specificity since it is able to aspartylate not only its cognate tRNA(Asp) but also tRNA(Asn). Reaction proceeds in two steps: L-aspartate is first activated by ATP to form Asp-AMP and then transferred to the acceptor end of tRNA(Asp/Asn). This is Aspartate--tRNA(Asp/Asn) ligase from Parvibaculum lavamentivorans (strain DS-1 / DSM 13023 / NCIMB 13966).